We begin with the raw amino-acid sequence, 368 residues long: sn-1 linoleoyl-lipid 6-desaturase (368 aa).

2 helical membrane-spanning segments follow: residues 47 to 67 and 68 to 88; these read IILA…DVLW and MKLL…FNIS. Positions 89–93 match the Histidine box-1 motif; it reads HDGNH. The short motif at 124 to 129 is the Histidine box-2 element; sequence HNVLHH. The next 3 helical transmembrane spans lie at 164–184, 204–224, and 233–253; these read WFIW…DVQT, IATL…IPIA, and VIGA…VFML. Residues 305–309 carry the Histidine box-3 motif; sequence HHLFP.

Belongs to the fatty acid desaturase type 2 family. It depends on Fe(2+) as a cofactor.

Its subcellular location is the cell inner membrane. It localises to the cellular thylakoid membrane. It carries out the reaction a 1-[(9Z,12Z)-octadecdienoyl]-2-acyl-glycerolipid + 2 reduced [2Fe-2S]-[ferredoxin] + O2 + 2 H(+) = a 1-[(6Z,9Z,12Z)-octadectrienoyl]-2-acyl-glycerolipid + 2 oxidized [2Fe-2S]-[ferredoxin] + 2 H2O. It functions in the pathway lipid metabolism; polyunsaturated fatty acid biosynthesis. Its activity is regulated as follows. Activity requires ferredoxin, which is the natural electron donor, or cytochrome b5. In addition, activity is increased in the presence of the intermediate electron donors, NADPH and FADH(2). Functionally, desaturase involved in fatty acid biosynthesis. Introduces a double bond at carbon 6 of linoleoyl group (18:2) attached to the sn-1 position of the glycerol moiety of membrane glycerolipids, leading to the formation of gamma-linolenic acid (GLA). This chain is sn-1 linoleoyl-lipid 6-desaturase, found in Arthrospira platensis (Spirulina platensis).